We begin with the raw amino-acid sequence, 256 residues long: Proteasome subunit alpha (256 aa).

The segment at 226–256 is disordered; sequence LLPSQEESGSTDGEASGDAGDDKKTGDDKKS. Basic and acidic residues predominate over residues 245–256; that stretch reads GDDKKTGDDKKS.

This sequence belongs to the peptidase T1A family. The 20S proteasome core is composed of 14 alpha and 14 beta subunits that assemble into four stacked heptameric rings, resulting in a barrel-shaped structure. The two inner rings, each composed of seven catalytic beta subunits, are sandwiched by two outer rings, each composed of seven alpha subunits. The catalytic chamber with the active sites is on the inside of the barrel. Has a gated structure, the ends of the cylinder being occluded by the N-termini of the alpha-subunits. Is capped by the proteasome-associated ATPase, ARC.

Its subcellular location is the cytoplasm. Its pathway is protein degradation; proteasomal Pup-dependent pathway. Its activity is regulated as follows. The formation of the proteasomal ATPase ARC-20S proteasome complex, likely via the docking of the C-termini of ARC into the intersubunit pockets in the alpha-rings, may trigger opening of the gate for substrate entry. Interconversion between the open-gate and close-gate conformations leads to a dynamic regulation of the 20S proteasome proteolysis activity. Component of the proteasome core, a large protease complex with broad specificity involved in protein degradation. The sequence is that of Proteasome subunit alpha from Saccharopolyspora erythraea (strain ATCC 11635 / DSM 40517 / JCM 4748 / NBRC 13426 / NCIMB 8594 / NRRL 2338).